Consider the following 380-residue polypeptide: N5-carboxyaminoimidazole ribonucleotide synthase (380 aa).

Residues R108, K148, 153-159 (GYDGKGQ), 183-186 (ESWV), E191, H214, and 268-269 (NE) each bind ATP. In terms of domain architecture, ATP-grasp spans 112 to 298 (KKAIQSAGCE…QFEQHIRAVC (187 aa)).

The protein belongs to the PurK/PurT family. Homodimer.

It catalyses the reaction 5-amino-1-(5-phospho-beta-D-ribosyl)imidazole + hydrogencarbonate + ATP = 5-carboxyamino-1-(5-phospho-D-ribosyl)imidazole + ADP + phosphate + 2 H(+). It functions in the pathway purine metabolism; IMP biosynthesis via de novo pathway; 5-amino-1-(5-phospho-D-ribosyl)imidazole-4-carboxylate from 5-amino-1-(5-phospho-D-ribosyl)imidazole (N5-CAIR route): step 1/2. Its function is as follows. Catalyzes the ATP-dependent conversion of 5-aminoimidazole ribonucleotide (AIR) and HCO(3)(-) to N5-carboxyaminoimidazole ribonucleotide (N5-CAIR). In Bacillus subtilis (strain 168), this protein is N5-carboxyaminoimidazole ribonucleotide synthase.